We begin with the raw amino-acid sequence, 123 residues long: UPF0102 protein PputW619_0932 (123 aa).

Belongs to the UPF0102 family.

The polypeptide is UPF0102 protein PputW619_0932 (Pseudomonas putida (strain W619)).